The chain runs to 246 residues: MECVNCDCTVKTMDNLDQAIRALLQRGKHVNRMMDNEKLIREARRMEEVQQLKMQIPKPVDKKPRPPPSENNLKLISCEETCMDETLKNSSKPRMIYNKQLGRAESIDFDVPSLSYESSEKCAGETSPYTSASVSNSKKATSSSNFTKSETTTITELTTSTFKKSNNSSGGALVLDNHYLINNDDGTVKKLPMKVYVKQRLEDGSLDVQLVFFDENSQKVMDISMLVNGKKIRNVQFCGKDAKLVN.

The tract at residues 120 to 149 (EKCAGETSPYTSASVSNSKKATSSSNFTKS) is disordered. Residues 130–149 (TSASVSNSKKATSSSNFTKS) show a composition bias toward low complexity.

This is an uncharacterized protein from Caenorhabditis elegans.